A 393-amino-acid chain; its full sequence is NAD(P)H-quinone oxidoreductase subunit H, chloroplastic (393 aa).

The protein belongs to the complex I 49 kDa subunit family. In terms of assembly, NDH is composed of at least 16 different subunits, 5 of which are encoded in the nucleus.

Its subcellular location is the plastid. The protein localises to the chloroplast thylakoid membrane. It carries out the reaction a plastoquinone + NADH + (n+1) H(+)(in) = a plastoquinol + NAD(+) + n H(+)(out). The enzyme catalyses a plastoquinone + NADPH + (n+1) H(+)(in) = a plastoquinol + NADP(+) + n H(+)(out). Its function is as follows. NDH shuttles electrons from NAD(P)H:plastoquinone, via FMN and iron-sulfur (Fe-S) centers, to quinones in the photosynthetic chain and possibly in a chloroplast respiratory chain. The immediate electron acceptor for the enzyme in this species is believed to be plastoquinone. Couples the redox reaction to proton translocation, and thus conserves the redox energy in a proton gradient. The protein is NAD(P)H-quinone oxidoreductase subunit H, chloroplastic of Cicer arietinum (Chickpea).